A 131-amino-acid chain; its full sequence is Small ribosomal subunit protein uS8 (131 aa).

This sequence belongs to the universal ribosomal protein uS8 family. In terms of assembly, part of the 30S ribosomal subunit. Contacts proteins S5 and S12.

Functionally, one of the primary rRNA binding proteins, it binds directly to 16S rRNA central domain where it helps coordinate assembly of the platform of the 30S subunit. The protein is Small ribosomal subunit protein uS8 of Dictyoglomus thermophilum (strain ATCC 35947 / DSM 3960 / H-6-12).